The following is a 299-amino-acid chain: ATP phosphoribosyltransferase (299 aa).

It belongs to the ATP phosphoribosyltransferase family. Long subfamily. Mg(2+) is required as a cofactor.

Its subcellular location is the cytoplasm. It carries out the reaction 1-(5-phospho-beta-D-ribosyl)-ATP + diphosphate = 5-phospho-alpha-D-ribose 1-diphosphate + ATP. The protein operates within amino-acid biosynthesis; L-histidine biosynthesis; L-histidine from 5-phospho-alpha-D-ribose 1-diphosphate: step 1/9. Its activity is regulated as follows. Feedback inhibited by histidine. In terms of biological role, catalyzes the condensation of ATP and 5-phosphoribose 1-diphosphate to form N'-(5'-phosphoribosyl)-ATP (PR-ATP). Has a crucial role in the pathway because the rate of histidine biosynthesis seems to be controlled primarily by regulation of HisG enzymatic activity. This is ATP phosphoribosyltransferase (hisG) from Pasteurella multocida (strain Pm70).